The chain runs to 161 residues: Cyclic pyranopterin monophosphate synthase (161 aa).

Substrate is bound by residues leucine 73–histidine 75 and methionine 110–glutamate 111. Residue aspartate 125 is part of the active site.

It belongs to the MoaC family. In terms of assembly, homohexamer; trimer of dimers.

It carries out the reaction (8S)-3',8-cyclo-7,8-dihydroguanosine 5'-triphosphate = cyclic pyranopterin phosphate + diphosphate. It functions in the pathway cofactor biosynthesis; molybdopterin biosynthesis. Its function is as follows. Catalyzes the conversion of (8S)-3',8-cyclo-7,8-dihydroguanosine 5'-triphosphate to cyclic pyranopterin monophosphate (cPMP). This is Cyclic pyranopterin monophosphate synthase from Pseudomonas syringae pv. tomato (strain ATCC BAA-871 / DC3000).